The following is an 875-amino-acid chain: Alanine--tRNA ligase (875 aa).

Zn(2+)-binding residues include His-564, His-568, Cys-666, and His-670.

It belongs to the class-II aminoacyl-tRNA synthetase family. As to quaternary structure, homotetramer. Requires Zn(2+) as cofactor.

It is found in the cytoplasm. The enzyme catalyses tRNA(Ala) + L-alanine + ATP = L-alanyl-tRNA(Ala) + AMP + diphosphate. Functionally, catalyzes the attachment of alanine to tRNA(Ala) in a two-step reaction: alanine is first activated by ATP to form Ala-AMP and then transferred to the acceptor end of tRNA(Ala). Also edits incorrectly charged Ser-tRNA(Ala) and Gly-tRNA(Ala) via its editing domain. This Pectobacterium atrosepticum (strain SCRI 1043 / ATCC BAA-672) (Erwinia carotovora subsp. atroseptica) protein is Alanine--tRNA ligase.